The chain runs to 121 residues: Large ribosomal subunit protein uL18 (121 aa).

A compositionally biased stretch (basic residues) spans 1–19 (MASKKVQKIRDKRKARVRA). Positions 1-23 (MASKKVQKIRDKRKARVRAKISG) are disordered.

Belongs to the universal ribosomal protein uL18 family. In terms of assembly, part of the 50S ribosomal subunit; part of the 5S rRNA/L5/L18/L25 subcomplex. Contacts the 5S and 23S rRNAs.

In terms of biological role, this is one of the proteins that bind and probably mediate the attachment of the 5S RNA into the large ribosomal subunit, where it forms part of the central protuberance. This chain is Large ribosomal subunit protein uL18, found in Syntrophus aciditrophicus (strain SB).